The primary structure comprises 159 residues: Ornithine decarboxylase antizyme (159 aa).

Belongs to the ODC antizyme family. Interacts with ODC1 and thereby sterically blocks ODC homodimerization.

Its function is as follows. Ornithine decarboxylase (ODC) antizyme protein that negatively regulates ODC activity and intracellular polyamine biosynthesis and uptake in response to increased intracellular polyamine levels. Binds to ODC monomers, inhibiting the assembly of the functional ODC homodimer, and targets the monomers for ubiquitin-independent proteolytic destruction by the 26S proteasome. This chain is Ornithine decarboxylase antizyme, found in Caenorhabditis elegans.